Consider the following 353-residue polypeptide: Photosystem II protein D1 (353 aa).

Thr-2 carries the N-acetylthreonine modification. Thr-2 is subject to Phosphothreonine. The next 3 membrane-spanning stretches (helical) occupy residues Tyr-29–Ser-46, His-118–Leu-133, and Trp-142–Ala-156. Residue His-118 participates in chlorophyll a binding. Tyr-126 contributes to the pheophytin a binding site. Asp-170 and Glu-189 together coordinate [CaMn4O5] cluster. A helical membrane pass occupies residues Phe-197 to Leu-218. Chlorophyll a is bound at residue His-198. Residues His-215 and Ser-264–Phe-265 each bind a quinone. Residue His-215 coordinates Fe cation. Residue His-272 participates in Fe cation binding. The chain crosses the membrane as a helical span at residues Phe-274–Leu-288. Residues His-332, Glu-333, Asp-342, and Ala-344 each contribute to the [CaMn4O5] cluster site. Residues Ala-345 to Gly-353 constitute a propeptide that is removed on maturation.

It belongs to the reaction center PufL/M/PsbA/D family. PSII is composed of 1 copy each of membrane proteins PsbA, PsbB, PsbC, PsbD, PsbE, PsbF, PsbH, PsbI, PsbJ, PsbK, PsbL, PsbM, PsbT, PsbX, PsbY, PsbZ, Psb30/Ycf12, at least 3 peripheral proteins of the oxygen-evolving complex and a large number of cofactors. It forms dimeric complexes. The cofactor is The D1/D2 heterodimer binds P680, chlorophylls that are the primary electron donor of PSII, and subsequent electron acceptors. It shares a non-heme iron and each subunit binds pheophytin, quinone, additional chlorophylls, carotenoids and lipids. D1 provides most of the ligands for the Mn4-Ca-O5 cluster of the oxygen-evolving complex (OEC). There is also a Cl(-1) ion associated with D1 and D2, which is required for oxygen evolution. The PSII complex binds additional chlorophylls, carotenoids and specific lipids.. Tyr-161 forms a radical intermediate that is referred to as redox-active TyrZ, YZ or Y-Z. In terms of processing, C-terminally processed by CTPA; processing is essential to allow assembly of the oxygen-evolving complex and thus photosynthetic growth.

It localises to the plastid. The protein localises to the chloroplast thylakoid membrane. It catalyses the reaction 2 a plastoquinone + 4 hnu + 2 H2O = 2 a plastoquinol + O2. In terms of biological role, photosystem II (PSII) is a light-driven water:plastoquinone oxidoreductase that uses light energy to abstract electrons from H(2)O, generating O(2) and a proton gradient subsequently used for ATP formation. It consists of a core antenna complex that captures photons, and an electron transfer chain that converts photonic excitation into a charge separation. The D1/D2 (PsbA/PsbD) reaction center heterodimer binds P680, the primary electron donor of PSII as well as several subsequent electron acceptors. In Conocephalum conicum (Snakeskin liverwort), this protein is Photosystem II protein D1.